Consider the following 259-residue polypeptide: Tumor necrosis factor receptor superfamily member 10C (259 aa).

The first 25 residues, 1–25, serve as a signal peptide directing secretion; the sequence is MARIPKTLKFVVVIVAVLLPVLAYS. 3 TNFR-Cys repeats span residues 29–66, 69–109, and 110–149; these read ARQE…TGAC, CTEG…DTVC, and QCKE…DIQC. Residues 30-45 are compositionally biased toward polar residues; the sequence is RQEEVPQQTVAPQQQR. A disordered region spans residues 30–56; it reads RQEEVPQQTVAPQQQRHSFKGEECPAG. 7 disulfide bridges follow: cysteine 53–cysteine 66, cysteine 69–cysteine 85, cysteine 88–cysteine 101, cysteine 91–cysteine 109, cysteine 111–cysteine 125, cysteine 128–cysteine 141, and cysteine 131–cysteine 149. A glycan (N-linked (GlcNAc...) (high mannose) asparagine) is linked at asparagine 77. 2 N-linked (GlcNAc...) (high mannose) asparagine glycosylation sites follow: asparagine 140 and asparagine 156. The disordered stretch occupies residues 160 to 224; sequence ETPAAEETMN…TSPGTPAPAA (65 aa). TAPE repeat units lie at residues 162-176, 177-191, 192-206, 207-221, and 222-236; these read PAAE…GTPA. Low complexity predominate over residues 185–217; that stretch reads TSPGTPAPAAEETMTTSPGTPAPAAEETMTTSP. Alanine 236 is lipidated: GPI-anchor amidated alanine. A propeptide spans 237–259 (removed in mature form); it reads SSHYLSCTIVGIIVLIVLLIVFV.

N-glycosylated and O-glycosylated. In terms of tissue distribution, higher expression in normal tissues than in tumor cell lines. Highly expressed in peripheral blood lymphocytes, spleen, skeletal muscle, placenta, lung and heart.

It is found in the cell membrane. Receptor for the cytotoxic ligand TRAIL. Lacks a cytoplasmic death domain and hence is not capable of inducing apoptosis. May protect cells against TRAIL mediated apoptosis by competing with TRAIL-R1 and R2 for binding to the ligand. The chain is Tumor necrosis factor receptor superfamily member 10C (TNFRSF10C) from Homo sapiens (Human).